The chain runs to 130 residues: MLKTLPPTLREKKRYVALEIIFEEELFQKDVISIVRNALMNYSGVLGCSKANPWLIDYNHPYGILRISREEVDNLRSSLSLANEHRKKPINIHIIGISNSVKHIREKFLHVPHEPYYKVIQKLKKKGPKK.

The protein belongs to the eukaryotic/archaeal RNase P protein component 2 family. As to quaternary structure, consists of a catalytic RNA component and at least 4-5 protein subunits.

The protein resides in the cytoplasm. The enzyme catalyses Endonucleolytic cleavage of RNA, removing 5'-extranucleotides from tRNA precursor.. Functionally, part of ribonuclease P, a protein complex that generates mature tRNA molecules by cleaving their 5'-ends. The sequence is that of Ribonuclease P protein component 2 from Methanococcus maripaludis (strain C6 / ATCC BAA-1332).